Here is a 367-residue protein sequence, read N- to C-terminus: DNA replication and repair protein RecF (367 aa).

30–37 (GANGSGKT) is an ATP binding site.

Belongs to the RecF family.

The protein localises to the cytoplasm. Functionally, the RecF protein is involved in DNA metabolism; it is required for DNA replication and normal SOS inducibility. RecF binds preferentially to single-stranded, linear DNA. It also seems to bind ATP. The sequence is that of DNA replication and repair protein RecF from Pseudomonas putida (strain ATCC 47054 / DSM 6125 / CFBP 8728 / NCIMB 11950 / KT2440).